The primary structure comprises 381 residues: Subtilisin NAT (381 aa).

An N-terminal signal peptide occupies residues 1–29 (MRSKKLWISLLFALTLIFTMAFSNMSAQA). The propeptide occupies 30–106 (AGKSSTEKKY…VEEDHIAHEY (77 aa)). The region spanning 38-103 (KYIVGFKQTM…VAYVEEDHIA (66 aa)) is the Inhibitor I9 domain. Residues 111–380 (PYGISQIKAP…KGLINVQAAA (270 aa)) form the Peptidase S8 domain. The active-site Charge relay system is Asp-138. Asp-147 provides a ligand contact to Ca(2+). His-170 (charge relay system) is an active-site residue. Positions 181, 183, 185, 187, 275, 277, 280, and 303 each coordinate Ca(2+). Ser-327 functions as the Charge relay system in the catalytic mechanism.

It belongs to the peptidase S8 family. As to quaternary structure, monomer. Requires Ca(2+) as cofactor.

It is found in the secreted. The catalysed reaction is Hydrolysis of proteins with broad specificity for peptide bonds, and a preference for a large uncharged residue in P1. Hydrolyzes peptide amides.. With respect to regulation, inhibited by PMSF (phenylmethylsulfonyl fluoride). In terms of biological role, subtilisin is an extracellular alkaline serine protease, it catalyzes the hydrolysis of proteins and peptide amides. Subtilisin NAT also has fibrinolytic activity. The sequence is that of Subtilisin NAT from Bacillus subtilis subsp. natto.